The sequence spans 80 residues: Acyl carrier protein (80 aa).

Positions 4 to 79 constitute a Carrier domain; sequence EAILEKVRSI…DAVKYIEDKQ (76 aa). Ser39 is subject to O-(pantetheine 4'-phosphoryl)serine.

It belongs to the acyl carrier protein (ACP) family. In terms of processing, 4'-phosphopantetheine is transferred from CoA to a specific serine of apo-ACP by AcpS. This modification is essential for activity because fatty acids are bound in thioester linkage to the sulfhydryl of the prosthetic group.

It localises to the cytoplasm. Its pathway is lipid metabolism; fatty acid biosynthesis. Functionally, carrier of the growing fatty acid chain in fatty acid biosynthesis. This is Acyl carrier protein from Synechococcus sp. (strain CC9902).